Consider the following 356-residue polypeptide: Carbohydrate sulfotransferase 10 (356 aa).

Residues 1 to 6 (MHHQWL) are Cytoplasmic-facing. A helical; Signal-anchor for type II membrane protein transmembrane segment spans residues 7–27 (LLAACFWVIFMFMVASKFITL). Over 28-356 (TFKDPDGYSA…GYQKPDFLLN (329 aa)) the chain is Lumenal. N-linked (GlcNAc...) asparagine glycosylation is present at N99. 3'-phosphoadenylyl sulfate is bound by residues 127–133 (PKVGNTQ) and 189–197 (RDPFERLIS). N-linked (GlcNAc...) asparagine glycans are attached at residues N228 and N316.

Belongs to the sulfotransferase 2 family.

The protein localises to the golgi apparatus membrane. It catalyses the reaction 3-O-{beta-D-GlcA-(1-&gt;[3)-alpha-D-Xyl-(1-&gt;3)-beta-D-GlcA-(1-&gt;](n)-4)-beta-D-Xyl-(1-&gt;4)-Rib-ol-P-Rib-ol-P-3-beta-D-GalNAc-(1-&gt;3)-beta-D-GlcNAc-(1-&gt;4)-O-6-P-alpha-D-Man}-L-Thr-[protein] + 3'-phosphoadenylyl sulfate = 3-O-{O-3-S-beta-D-GlcA-(1-&gt;[3)-alpha-D-Xyl-(1-&gt;3)-beta-D-GlcA-(1-&gt;](n)-4)-beta-D-Xyl-(1-&gt;4)-Rib-ol-P-Rib-ol-P-3-beta-D-GalNAc-(1-&gt;3)-beta-D-GlcNAc-(1-&gt;4)-O-6-P-alpha-D-Man}-L-Thr-[protein] + adenosine 3',5'-bisphosphate + H(+). The catalysed reaction is 17beta-estradiol 3-O-(beta-D-glucuronate) + 3'-phosphoadenylyl sulfate = 17beta-estradiol 3-O-(3-sulfo-beta-D-glucuronate) + adenosine 3',5'-bisphosphate + H(+). The enzyme catalyses 17beta-estradiol 3-O-(beta-D-glucuronate) 17-sulfate + 3'-phosphoadenylyl sulfate = 17beta-estradiol 3-O-(3-sulfo-beta-D-glucuronate) 17-sulfate + adenosine 3',5'-bisphosphate + H(+). It carries out the reaction 17beta-estradiol 17-O-(beta-D-glucuronate) + 3'-phosphoadenylyl sulfate = 17beta-estradiol 17-O-(3-sulfo-beta-D-glucuronate) + adenosine 3',5'-bisphosphate + H(+). It catalyses the reaction 16alpha,17beta-estriol 3-O-(beta-D-glucuronate) + 3'-phosphoadenylyl sulfate = 16alpha,17beta-estriol 3-O-(3-sulfo-beta-D-glucuronate) + adenosine 3',5'-bisphosphate + H(+). The catalysed reaction is 16alpha,17beta-estriol 16-O-(beta-D-glucuronate) + 3'-phosphoadenylyl sulfate = 16alpha,17beta-estriol 16-O-(3-sulfo-beta-D-glucuronate) + adenosine 3',5'-bisphosphate + H(+). The enzyme catalyses 16alpha,17beta-estriol 17-O-(beta-D-glucuronate) + 3'-phosphoadenylyl sulfate = 16alpha,17beta-estriol 17-O-(3-sulfo-beta-D-glucuronate) + adenosine 3',5'-bisphosphate + H(+). It carries out the reaction estrone 3-O-(beta-D-glucuronate) + 3'-phosphoadenylyl sulfate = estrone 3-O-(3-sulfo-beta-D-glucuronate) + adenosine 3',5'-bisphosphate + H(+). It catalyses the reaction 3alpha,20alpha-dihydroxy-5beta-pregnane 3-O-(beta-D-glucuronate) + 3'-phosphoadenylyl sulfate = 3alpha,20alpha-dihydroxy-5beta-pregnane 3-O-(3-sulfo-beta-D-glucuronate) + adenosine 3',5'-bisphosphate + H(+). The catalysed reaction is testosterone 17-O-(beta-D-glucuronate) + 3'-phosphoadenylyl sulfate = testosterone 17-O-(3-sulfo-beta-D-glucuronate) + adenosine 3',5'-bisphosphate + H(+). The enzyme catalyses 3beta-androst-5-en-17-one 3-O-(beta-D-glucuronate) + 3'-phosphoadenylyl sulfate = 3beta-androst-5-en-17-one 3-O-(3-sulfo-beta-D-glucuronate) + adenosine 3',5'-bisphosphate + H(+). It carries out the reaction 3alpha,17alpha-dihydroxy-5beta-androstane-11-one-17beta-carboxylate 3-O-(beta-D-glucuronate) + 3'-phosphoadenylyl sulfate = 3alpha,17alpha-dihydroxy-5beta-androstane-11-one-17beta-carboxylate 3-O-(3-sulfo-beta-D-glucuronate) + adenosine 3',5'-bisphosphate + H(+). It catalyses the reaction 3alpha-hydroxyetiocholan-17-one 3-O-(beta-D-glucuronate) + 3'-phosphoadenylyl sulfate = 3alpha-hydroxyetiocholan-17-one 3-O-(3-sulfo-beta-D-glucuronate) + adenosine 3',5'-bisphosphate + H(+). It functions in the pathway steroid metabolism. Its pathway is protein modification; carbohydrate sulfation. In terms of biological role, catalyzes the transfer of sulfate from 3'-phosphoadenylyl sulfate (PAPS) to position 3 of terminal glucuronic acid of both protein- and lipid-linked oligosaccharides. Participates in biosynthesis of HNK-1 carbohydrate structure 3-O-sulfo-beta-D-GlcA-(1-&gt;3)-beta-D-Gal-(1-&gt;4)-D-GlcNAc-R, a sulfated glucuronyl-lactosaminyl residue carried by many neural recognition molecules, which is involved in cell interactions during ontogenetic development and in synaptic plasticity in the adult. May be indirectly involved in synapse plasticity of the hippocampus, via its role in HNK-1 biosynthesis. Sulfates terminal glucuronyl residue of the laminin globular (LG)-domain binding epitope on DAG1/alpha-dystroglycan and prevents further polymerization by LARGE1 glycosyltransferase. Likely defines the chain length of LG epitope, conferring binding specificity to extracellular matrix components. Plays a role in down-regulating the steroid hormones. Sulfates glucuronidated estrogens and androgens with an impact in hormone cycle and fertility. Has a preference for glucuronyl moiety at the 3-hydroxyl group of a sterol ring rather than the 17-hydroxyl group, showing high catalytic efficiency for 17beta-estradiol 3-O-(beta-D-glucuronate) and dehydroepiandrosterone 3-O-(beta-D-glucuronate) hormones. This Mus musculus (Mouse) protein is Carbohydrate sulfotransferase 10.